We begin with the raw amino-acid sequence, 113 residues long: UPF0145 protein MTH_544 (113 aa).

It belongs to the UPF0145 family.

The polypeptide is UPF0145 protein MTH_544 (Methanothermobacter thermautotrophicus (strain ATCC 29096 / DSM 1053 / JCM 10044 / NBRC 100330 / Delta H) (Methanobacterium thermoautotrophicum)).